We begin with the raw amino-acid sequence, 131 residues long: Profilin-5 (131 aa).

The cysteines at positions 13 and 115 are disulfide-linked. The short motif at Ala81–Thr97 is the Involved in PIP2 interaction element. Residue Thr111 is modified to Phosphothreonine.

It belongs to the profilin family. In terms of assembly, occurs in many kinds of cells as a complex with monomeric actin in a 1:1 ratio. Phosphorylated by MAP kinases.

It localises to the cytoplasm. Its subcellular location is the cytoskeleton. Its function is as follows. Binds to actin and affects the structure of the cytoskeleton. At high concentrations, profilin prevents the polymerization of actin, whereas it enhances it at low concentrations. The sequence is that of Profilin-5 from Phleum pratense (Common timothy).